The primary structure comprises 131 residues: Ribosome-binding factor A (131 aa).

It belongs to the RbfA family. As to quaternary structure, monomer. Binds 30S ribosomal subunits, but not 50S ribosomal subunits or 70S ribosomes.

It localises to the cytoplasm. Functionally, one of several proteins that assist in the late maturation steps of the functional core of the 30S ribosomal subunit. Associates with free 30S ribosomal subunits (but not with 30S subunits that are part of 70S ribosomes or polysomes). Required for efficient processing of 16S rRNA. May interact with the 5'-terminal helix region of 16S rRNA. In Vibrio vulnificus (strain CMCP6), this protein is Ribosome-binding factor A.